Here is a 184-residue protein sequence, read N- to C-terminus: MTTIVSVRRNNKVVIAGDGQVSLGNTVMKGNARKVRRLYNNKVLAGFAGGTADAFTLFERFESKLQMHQGHLTKAAVELAKDWRSDRALRKLEALLAVADETASLIITGNGDVVQPENDLIAIGSGGAYAQAAATALLENTELDAREIAEKALNIAGDICVFTNHNHTIEELEIPAELPNLSQA.

T2 is an active-site residue. Residues G157, C160, and T163 each coordinate Na(+).

This sequence belongs to the peptidase T1B family. HslV subfamily. In terms of assembly, a double ring-shaped homohexamer of HslV is capped on each side by a ring-shaped HslU homohexamer. The assembly of the HslU/HslV complex is dependent on binding of ATP.

It localises to the cytoplasm. It carries out the reaction ATP-dependent cleavage of peptide bonds with broad specificity.. Allosterically activated by HslU binding. Protease subunit of a proteasome-like degradation complex believed to be a general protein degrading machinery. This Vibrio vulnificus (strain CMCP6) protein is ATP-dependent protease subunit HslV.